A 176-amino-acid polypeptide reads, in one-letter code: NAD(P)H-quinone oxidoreductase subunit J (176 aa).

The disordered stretch occupies residues 1–32 (MEKEGLAKSSDTSIKKEGFISQSLSKDGIPNQ). Residues 20-32 (ISQSLSKDGIPNQ) are compositionally biased toward polar residues.

Belongs to the complex I 30 kDa subunit family. As to quaternary structure, NDH-1 can be composed of about 15 different subunits; different subcomplexes with different compositions have been identified which probably have different functions.

Its subcellular location is the cellular thylakoid membrane. It carries out the reaction a plastoquinone + NADH + (n+1) H(+)(in) = a plastoquinol + NAD(+) + n H(+)(out). The enzyme catalyses a plastoquinone + NADPH + (n+1) H(+)(in) = a plastoquinol + NADP(+) + n H(+)(out). Its function is as follows. NDH-1 shuttles electrons from an unknown electron donor, via FMN and iron-sulfur (Fe-S) centers, to quinones in the respiratory and/or the photosynthetic chain. The immediate electron acceptor for the enzyme in this species is believed to be plastoquinone. Couples the redox reaction to proton translocation, and thus conserves the redox energy in a proton gradient. Cyanobacterial NDH-1 also plays a role in inorganic carbon-concentration. This chain is NAD(P)H-quinone oxidoreductase subunit J, found in Prochlorococcus marinus (strain MIT 9215).